The following is a 58-amino-acid chain: Histatherin (58 aa).

Residues 1–19 (MKIFIFIFIMALILAMIRA) form the signal peptide.

It belongs to the histatin/statherin family. As to expression, expressed in mammary glands.

It is found in the secreted. This is Histatherin from Bos taurus (Bovine).